The following is a 201-amino-acid chain: Small ribosomal subunit protein uS4c (201 aa).

A disordered region spans residues Leu15–Gln43. Residues Met89 to Asn150 form the S4 RNA-binding domain.

Belongs to the universal ribosomal protein uS4 family. In terms of assembly, part of the 30S ribosomal subunit. Contacts protein S5. The interaction surface between S4 and S5 is involved in control of translational fidelity.

The protein resides in the plastid. It localises to the chloroplast. Functionally, one of the primary rRNA binding proteins, it binds directly to 16S rRNA where it nucleates assembly of the body of the 30S subunit. In terms of biological role, with S5 and S12 plays an important role in translational accuracy. This Amborella trichopoda protein is Small ribosomal subunit protein uS4c (rps4).